Consider the following 460-residue polypeptide: Argininosuccinate lyase (460 aa).

The protein belongs to the lyase 1 family. Argininosuccinate lyase subfamily.

It localises to the cytoplasm. It catalyses the reaction 2-(N(omega)-L-arginino)succinate = fumarate + L-arginine. Its pathway is amino-acid biosynthesis; L-arginine biosynthesis; L-arginine from L-ornithine and carbamoyl phosphate: step 3/3. This is Argininosuccinate lyase from Rhodopirellula baltica (strain DSM 10527 / NCIMB 13988 / SH1).